A 345-amino-acid chain; its full sequence is Eukaryotic translation initiation factor 3 subunit F (345 aa).

One can recognise an MPN domain in the interval 30–166 (VVIQPQAIFS…TRAYISAPVG (137 aa)). The disordered stretch occupies residues 308–345 (GGESGGAESGAQRGQRGGKGGRGGQQRNQERGAEEARA). Residues 322-331 (QRGGKGGRGG) are compositionally biased toward gly residues. Residues 335 to 345 (NQERGAEEARA) are compositionally biased toward basic and acidic residues.

The protein belongs to the eIF-3 subunit F family. As to quaternary structure, component of the eukaryotic translation initiation factor 3 (eIF-3) complex.

It localises to the cytoplasm. Component of the eukaryotic translation initiation factor 3 (eIF-3) complex, which is involved in protein synthesis of a specialized repertoire of mRNAs and, together with other initiation factors, stimulates binding of mRNA and methionyl-tRNAi to the 40S ribosome. The eIF-3 complex specifically targets and initiates translation of a subset of mRNAs involved in cell proliferation. This chain is Eukaryotic translation initiation factor 3 subunit F, found in Aspergillus clavatus (strain ATCC 1007 / CBS 513.65 / DSM 816 / NCTC 3887 / NRRL 1 / QM 1276 / 107).